The following is a 69-amino-acid chain: Pleurain-A1 (69 aa).

An N-terminal signal peptide occupies residues 1–18; that stretch reads MFTLKKTLLLLFFLGTIS. Positions 19–43 are excised as a propeptide; it reads ISLCKQERDADEDDGRKMTEEEVKR. Residues Cys63 and Cys69 are joined by a disulfide bond.

In terms of tissue distribution, expressed by the skin glands.

The protein localises to the secreted. Antimicrobial peptide. Has activity against the Gram-positive bacterium S.aureus ATCC2592 (MIC=15 ug/ml), the Gram-negative bacteria E.coli ATCC25922 (MIC=60 ug/ml), B.dysenteriae (MIC=120 ug/ml), H.pylori NTCT11637 (MIC=30 ug/ml), and the fungus C.albicans ATCC2002 (MIC=30 ug/ml). Has little hemolytic activity on rabbit red blood cells. This chain is Pleurain-A1, found in Nidirana pleuraden (Yunnan pond frog).